A 133-amino-acid chain; its full sequence is Nickel-responsive regulator (133 aa).

The Ni(2+) site is built by His76, His87, His89, and Cys95.

This sequence belongs to the transcriptional regulatory CopG/NikR family. Homotetramer. Ni(2+) is required as a cofactor.

Its function is as follows. Transcriptional repressor of the nikABCDE operon. Is active in the presence of excessive concentrations of intracellular nickel. This Enterobacter sp. (strain 638) protein is Nickel-responsive regulator.